Reading from the N-terminus, the 276-residue chain is NAD-capped RNA hydrolase NudC (276 aa).

Residue Arg82 coordinates substrate. Residues Cys112 and Cys115 each coordinate Zn(2+). Glu125 contacts substrate. The Zn(2+) site is built by Cys130 and Cys133. Tyr138 is a substrate binding site. In terms of domain architecture, Nudix hydrolase spans 139–262 (PRISPSMIVL…SIARYLIDLY (124 aa)). A divalent metal cation-binding residues include Ala172, Glu188, and Glu192. The short motif at 173-194 (GFAEPGESAEDCLVREVREEVA) is the Nudix box element. 206–213 (QCWPFPHS) provides a ligand contact to substrate. Glu233 is a binding site for a divalent metal cation. Ala255 is a binding site for substrate.

This sequence belongs to the Nudix hydrolase family. NudC subfamily. Homodimer. Requires Mg(2+) as cofactor. Mn(2+) serves as cofactor. The cofactor is Zn(2+).

The catalysed reaction is a 5'-end NAD(+)-phospho-ribonucleoside in mRNA + H2O = a 5'-end phospho-adenosine-phospho-ribonucleoside in mRNA + beta-nicotinamide D-ribonucleotide + 2 H(+). It catalyses the reaction NAD(+) + H2O = beta-nicotinamide D-ribonucleotide + AMP + 2 H(+). The enzyme catalyses NADH + H2O = reduced beta-nicotinamide D-ribonucleotide + AMP + 2 H(+). In terms of biological role, mRNA decapping enzyme that specifically removes the nicotinamide adenine dinucleotide (NAD) cap from a subset of mRNAs by hydrolyzing the diphosphate linkage to produce nicotinamide mononucleotide (NMN) and 5' monophosphate mRNA. The NAD-cap is present at the 5'-end of some mRNAs and stabilizes RNA against 5'-processing. Has preference for mRNAs with a 5'-end purine. Catalyzes the hydrolysis of a broad range of dinucleotide pyrophosphates. The protein is NAD-capped RNA hydrolase NudC of Pseudomonas putida (strain ATCC 47054 / DSM 6125 / CFBP 8728 / NCIMB 11950 / KT2440).